The chain runs to 195 residues: Peptidyl-tRNA hydrolase (195 aa).

Tyr18 is a binding site for tRNA. The active-site Proton acceptor is the His23. The tRNA site is built by Tyr69, Asn71, and Asn117.

The protein belongs to the PTH family. As to quaternary structure, monomer.

It is found in the cytoplasm. It catalyses the reaction an N-acyl-L-alpha-aminoacyl-tRNA + H2O = an N-acyl-L-amino acid + a tRNA + H(+). Functionally, hydrolyzes ribosome-free peptidyl-tRNAs (with 1 or more amino acids incorporated), which drop off the ribosome during protein synthesis, or as a result of ribosome stalling. Its function is as follows. Catalyzes the release of premature peptidyl moieties from peptidyl-tRNA molecules trapped in stalled 50S ribosomal subunits, and thus maintains levels of free tRNAs and 50S ribosomes. The protein is Peptidyl-tRNA hydrolase of Nitrosomonas europaea (strain ATCC 19718 / CIP 103999 / KCTC 2705 / NBRC 14298).